A 336-amino-acid polypeptide reads, in one-letter code: Flavonol synthase/flavanone 3-hydroxylase (336 aa).

The segment at 99 to 118 (EKESVAKPEDSKDIEGYGTK) is disordered. Residues 196–296 (MAEYMMKINY…RMSWPVFLEP (101 aa)) form the Fe2OG dioxygenase domain. A 2-oxoglutarate-binding site is contributed by 204 to 206 (NYY). Positions 221, 223, and 277 each coordinate Fe cation. Residue 287–289 (RMS) coordinates 2-oxoglutarate.

The protein belongs to the iron/ascorbate-dependent oxidoreductase family. L-ascorbate serves as cofactor. It depends on Fe(2+) as a cofactor. As to expression, expressed in young seedlings (at protein level). Expressed in roots, emerging leaves, shoot-root transition zone, trichomes, flowers and siliques. In cotyledons, expressed mostly on the adaxial side and only in guard cells on the abaxial side.

The protein resides in the cytoplasm. It localises to the nucleus. The enzyme catalyses a (2R,3R)-dihydroflavonol + 2-oxoglutarate + O2 = a flavonol + succinate + CO2 + H2O. The catalysed reaction is a (2S)-flavan-4-one + 2-oxoglutarate + O2 = a (2R,3R)-dihydroflavonol + succinate + CO2. The protein operates within secondary metabolite biosynthesis; flavonoid biosynthesis. In terms of biological role, catalyzes the formation of flavonols from dihydroflavonols. It can act on dihydrokaempferol to produce kaempferol, on dihydroquercetin to produce quercitin and on dihydromyricetin to produce myricetin. In vitro catalyzes the oxidation of both enantiomers of naringenin to give both cis- and trans-dihydrokaempferol. The chain is Flavonol synthase/flavanone 3-hydroxylase (FLS1) from Arabidopsis thaliana (Mouse-ear cress).